Reading from the N-terminus, the 438-residue chain is Na(+)/H(+) antiporter NhaA (438 aa).

11 helical membrane-spanning segments follow: residues 23 to 43 (FGGI…NSFL), 62 to 82 (FFIG…LFFL), 104 to 124 (SFPV…YFFL), 133 to 153 (GFGI…MLLG), 162 to 182 (VFLI…IALF), 185 to 205 (TNLK…LAIL), 212 to 232 (SLIP…QSGI), 302 to 322 (FLAP…NAGV), 337 to 357 (LGVI…ITFI), 372 to 392 (WWHI…SMFI), and 410 to 430 (IAIL…LFAL).

This sequence belongs to the NhaA Na(+)/H(+) (TC 2.A.33) antiporter family.

The protein resides in the cell inner membrane. It catalyses the reaction Na(+)(in) + 2 H(+)(out) = Na(+)(out) + 2 H(+)(in). Its function is as follows. Na(+)/H(+) antiporter that extrudes sodium in exchange for external protons. The polypeptide is Na(+)/H(+) antiporter NhaA (Helicobacter pylori (strain J99 / ATCC 700824) (Campylobacter pylori J99)).